The chain runs to 166 residues: Probable histone deacetylase complex subunit SAP18 (166 aa).

Residues 143 to 166 are disordered; the sequence is GRRFNNREQGDRFDHRQRQRSPIR. Over residues 147 to 158 the composition is skewed to basic and acidic residues; it reads NNREQGDRFDHR.

The protein belongs to the SAP18 family. In terms of assembly, interacts with SIN3 and histone deacetylase.

Acts in transcription repression. Involved in the tethering of the SIN3 complex to core histone proteins. In Caenorhabditis elegans, this protein is Probable histone deacetylase complex subunit SAP18.